Reading from the N-terminus, the 121-residue chain is Large ribosomal subunit protein bL20 (121 aa).

The protein belongs to the bacterial ribosomal protein bL20 family.

Functionally, binds directly to 23S ribosomal RNA and is necessary for the in vitro assembly process of the 50S ribosomal subunit. It is not involved in the protein synthesizing functions of that subunit. The sequence is that of Large ribosomal subunit protein bL20 from Koribacter versatilis (strain Ellin345).